The chain runs to 243 residues: Peptidase E (243 aa).

Catalysis depends on charge relay system residues S118, D133, and H155.

It belongs to the peptidase S51 family.

The protein localises to the cytoplasm. The enzyme catalyses Dipeptidase E catalyzes the hydrolysis of dipeptides Asp-|-Xaa. It does not act on peptides with N-terminal Glu, Asn or Gln, nor does it cleave isoaspartyl peptides.. Hydrolyzes dipeptides containing N-terminal aspartate residues. May play a role in allowing the cell to use peptide aspartate to spare carbon otherwise required for the synthesis of the aspartate family of amino acids. In Streptomyces coelicolor (strain ATCC BAA-471 / A3(2) / M145), this protein is Peptidase E.